Here is a 443-residue protein sequence, read N- to C-terminus: COP9 signalosome complex subunit 2 (443 aa).

The tract at residues 1–275 (MSDMEDDFMC…DESGSPRRTT (275 aa)) is mediates interaction with NIF3L1. One can recognise a PCI domain in the interval 254–416 (AHTDFFEAFK…QLLELDHQKR (163 aa)).

It belongs to the CSN2 family. Component of the CSN complex, composed of COPS1/GPS1, COPS2, COPS3, COPS4, COPS5, COPS6, COPS7 (COPS7A or COPS7B), COPS8 and COPS9 isoform 1. In the complex, it probably interacts directly with COPS1, COPS4, COPS5, COPS6 and COPS7 (COPS7A or COPS7B). Specifically interacts with the ligand binding domain of the thyroid receptor (TR). Does not require the presence of thyroid hormone for its interaction. Interacts with CUL1 and CUL2. Interacts with IRF8/ICSBP1 and with nuclear receptors NR2F1 and NR0B1. Interacts with NIF3L1. Phosphorylated by CK2 and PKD kinases.

It is found in the cytoplasm. The protein resides in the nucleus. Its function is as follows. Essential component of the COP9 signalosome complex (CSN), a complex involved in various cellular and developmental processes. The CSN complex is an essential regulator of the ubiquitin (Ubl) conjugation pathway by mediating the deneddylation of the cullin subunits of SCF-type E3 ligase complexes, leading to decrease the Ubl ligase activity of SCF-type complexes such as SCF, CSA or DDB2. The complex is also involved in phosphorylation of p53/TP53, c-jun/JUN, IkappaBalpha/NFKBIA, ITPK1 and IRF8/ICSBP, possibly via its association with CK2 and PKD kinases. CSN-dependent phosphorylation of TP53 and JUN promotes and protects degradation by the Ubl system, respectively. Involved in early stage of neuronal differentiation via its interaction with NIF3L1. In Homo sapiens (Human), this protein is COP9 signalosome complex subunit 2 (COPS2).